Consider the following 281-residue polypeptide: Cytochrome c oxidase subunit 3 (281 aa).

Helical transmembrane passes span 34 to 54 (PWPI…VMTF), 59 to 79 (NGLF…TLWF), 103 to 123 (GFVL…WAFF), 148 to 168 (WEVP…VTYA), 179 to 199 (VIYG…FQGF), 220 to 240 (ATGF…VGLF), and 259 to 279 (ILYW…VYWW).

Belongs to the cytochrome c oxidase subunit 3 family. Component of the cytochrome c oxidase (complex IV, CIV), a multisubunit enzyme composed of a catalytic core of 3 subunits and several supernumerary subunits. The complex exists as a monomer or a dimer and forms supercomplexes (SCs) in the inner mitochondrial membrane with ubiquinol-cytochrome c oxidoreductase (cytochrome b-c1 complex, complex III, CIII).

It localises to the mitochondrion inner membrane. It catalyses the reaction 4 Fe(II)-[cytochrome c] + O2 + 8 H(+)(in) = 4 Fe(III)-[cytochrome c] + 2 H2O + 4 H(+)(out). Its function is as follows. Component of the cytochrome c oxidase, the last enzyme in the mitochondrial electron transport chain which drives oxidative phosphorylation. The respiratory chain contains 3 multisubunit complexes succinate dehydrogenase (complex II, CII), ubiquinol-cytochrome c oxidoreductase (cytochrome b-c1 complex, complex III, CIII) and cytochrome c oxidase (complex IV, CIV), that cooperate to transfer electrons derived from NADH and succinate to molecular oxygen, creating an electrochemical gradient over the inner membrane that drives transmembrane transport and the ATP synthase. Cytochrome c oxidase is the component of the respiratory chain that catalyzes the reduction of oxygen to water. Electrons originating from reduced cytochrome c in the intermembrane space (IMS) are transferred via the dinuclear copper A center (CU(A)) of subunit 2 and heme A of subunit 1 to the active site in subunit 1, a binuclear center (BNC) formed by heme A3 and copper B (CU(B)). The BNC reduces molecular oxygen to 2 water molecules using 4 electrons from cytochrome c in the IMS and 4 protons from the mitochondrial matrix. The sequence is that of Cytochrome c oxidase subunit 3 (COX3) from Rhizopus stolonifer (Rhizopus nigricans).